The primary structure comprises 257 residues: uncharacterized protein (257 aa).

A helical membrane pass occupies residues 6–26 (IFWLNLAAIIIISIVVSGDMF).

Belongs to the staphylococcal tandem lipoprotein family.

It localises to the cell membrane. This is an uncharacterized protein from Staphylococcus aureus (strain NCTC 8325 / PS 47).